We begin with the raw amino-acid sequence, 256 residues long: Flap endonuclease Xni (256 aa).

Position 105 (Asp105) interacts with Mg(2+). In terms of domain architecture, 5'-3' exonuclease spans Ser164–Val250. Met172, Ala173, Pro181, Ile183, and Ile186 together coordinate K(+). Positions Gly185 to Ser190 are interaction with DNA.

This sequence belongs to the Xni family. It depends on Mg(2+) as a cofactor. The cofactor is K(+).

Functionally, has flap endonuclease activity. During DNA replication, flap endonucleases cleave the 5'-overhanging flap structure that is generated by displacement synthesis when DNA polymerase encounters the 5'-end of a downstream Okazaki fragment. This is Flap endonuclease Xni from Shewanella loihica (strain ATCC BAA-1088 / PV-4).